The primary structure comprises 199 residues: Proteasome subunit beta type-2-B (199 aa).

M1 is modified (N-acetylmethionine).

This sequence belongs to the peptidase T1B family. Component of the 20S core complex of the 26S proteasome. The 26S proteasome is composed of a core protease (CP), known as the 20S proteasome, capped at one or both ends by the 19S regulatory particle (RP/PA700). The 20S proteasome core is composed of 28 subunits that are arranged in four stacked rings, resulting in a barrel-shaped structure. The two end rings are each formed by seven alpha subunits, and the two central rings are each formed by seven beta subunits. The catalytic chamber with the active sites is on the inside of the barrel. Ubiquitous low levels, higher expression in siliques and flowers.

The protein resides in the cytoplasm. The protein localises to the nucleus. Non-catalytic component of the proteasome, a multicatalytic proteinase complex which is characterized by its ability to cleave peptides with Arg, Phe, Tyr, Leu, and Glu adjacent to the leaving group at neutral or slightly basic pH. The proteasome has an ATP-dependent proteolytic activity. In Arabidopsis thaliana (Mouse-ear cress), this protein is Proteasome subunit beta type-2-B (PBD2).